Reading from the N-terminus, the 295-residue chain is 33 kDa chaperonin (295 aa).

Intrachain disulfides connect Cys238/Cys240 and Cys271/Cys274.

This sequence belongs to the HSP33 family. Under oxidizing conditions two disulfide bonds are formed involving the reactive cysteines. Under reducing conditions zinc is bound to the reactive cysteines and the protein is inactive.

The protein resides in the cytoplasm. Functionally, redox regulated molecular chaperone. Protects both thermally unfolding and oxidatively damaged proteins from irreversible aggregation. Plays an important role in the bacterial defense system toward oxidative stress. This is 33 kDa chaperonin from Clostridium botulinum (strain Alaska E43 / Type E3).